The sequence spans 448 residues: Glutamyl-tRNA reductase (448 aa).

Substrate-binding positions include 49-52 (TCNR), serine 109, 114-116 (ETQ), and glutamine 120. Cysteine 50 functions as the Nucleophile in the catalytic mechanism. NADP(+) is bound at residue 189–194 (GAGEMS).

Belongs to the glutamyl-tRNA reductase family. As to quaternary structure, homodimer.

It carries out the reaction (S)-4-amino-5-oxopentanoate + tRNA(Glu) + NADP(+) = L-glutamyl-tRNA(Glu) + NADPH + H(+). It participates in porphyrin-containing compound metabolism; protoporphyrin-IX biosynthesis; 5-aminolevulinate from L-glutamyl-tRNA(Glu): step 1/2. Its function is as follows. Catalyzes the NADPH-dependent reduction of glutamyl-tRNA(Glu) to glutamate 1-semialdehyde (GSA). This chain is Glutamyl-tRNA reductase, found in Staphylococcus aureus (strain NCTC 8325 / PS 47).